We begin with the raw amino-acid sequence, 458 residues long: 3-isopropylmalate dehydratase large subunit (458 aa).

Residues cysteine 339, cysteine 399, and cysteine 402 each contribute to the [4Fe-4S] cluster site.

The protein belongs to the aconitase/IPM isomerase family. LeuC type 1 subfamily. As to quaternary structure, heterodimer of LeuC and LeuD. The cofactor is [4Fe-4S] cluster.

It catalyses the reaction (2R,3S)-3-isopropylmalate = (2S)-2-isopropylmalate. The protein operates within amino-acid biosynthesis; L-leucine biosynthesis; L-leucine from 3-methyl-2-oxobutanoate: step 2/4. Catalyzes the isomerization between 2-isopropylmalate and 3-isopropylmalate, via the formation of 2-isopropylmaleate. This is 3-isopropylmalate dehydratase large subunit from Lactococcus lactis subsp. cremoris (strain MG1363).